Reading from the N-terminus, the 461-residue chain is Argininosuccinate lyase (461 aa).

This sequence belongs to the lyase 1 family. Argininosuccinate lyase subfamily.

It is found in the cytoplasm. It catalyses the reaction 2-(N(omega)-L-arginino)succinate = fumarate + L-arginine. It functions in the pathway amino-acid biosynthesis; L-arginine biosynthesis; L-arginine from L-ornithine and carbamoyl phosphate: step 3/3. This is Argininosuccinate lyase from Streptococcus thermophilus (strain CNRZ 1066).